We begin with the raw amino-acid sequence, 231 residues long: Ribonuclease 3 (231 aa).

The RNase III domain maps to 1 to 134; the sequence is MKTLEKKLAE…FLGALLLDAG (134 aa). A Mg(2+)-binding site is contributed by Glu47. Residue Asp51 is part of the active site. Residues Asp120 and Glu123 each coordinate Mg(2+). Glu123 is a catalytic residue. Residues 160-229 form the DRBM domain; sequence DYKTALQELL…AKNALEKLQR (70 aa).

The protein belongs to the ribonuclease III family. As to quaternary structure, homodimer. Mg(2+) is required as a cofactor.

The protein localises to the cytoplasm. It carries out the reaction Endonucleolytic cleavage to 5'-phosphomonoester.. Functionally, digests double-stranded RNA. Involved in the processing of primary rRNA transcript to yield the immediate precursors to the large and small rRNAs (23S and 16S). Also processes some mRNAs, and tRNAs when they are encoded in the rRNA operon. Its function is as follows. CRISPR (clustered regularly interspaced short palindromic repeat) is an adaptive immune system that provides protection against mobile genetic elements (viruses, transposable elements and conjugative plasmids). CRISPR clusters contain spacers, sequences complementary to antecedent mobile elements, and target invading nucleic acids. CRISPR clusters are transcribed and processed into CRISPR RNA (crRNA). In this organism endogenous ribonuclease 3 and Cas9 are required for correct coprocessing of pre-crRNA and the trans-encoded small RNA (tracrRNA). Cas9, crRNA and tracrRNA are required for cleavage of invading DNA. Complements pre-crRNA and tracrRNA coprocessing defects in an rnc deletion in S.pyogenes strain 370. In Streptococcus mutans serotype c (strain ATCC 700610 / UA159), this protein is Ribonuclease 3.